The following is an 84-amino-acid chain: CDC42 small effector protein 2 (84 aa).

Residues Cys-10 and Cys-11 are each lipidated (S-palmitoyl cysteine). In terms of domain architecture, CRIB spans 29–42 (IGEPTNFVHTAHVG). Residues Ser-43 and Ser-52 each carry the phosphoserine modification.

The protein belongs to the CDC42SE/SPEC family. Interacts with CDC42 (in GTP-bound form). Interacts weakly with RAC1 and not at all with RHOA. In terms of tissue distribution, widely expressed. Expressed at higher level in T-lymphocytes. Highly expressed in CCRF-CEM T-lymphocytes, Jurkat T-lymphocytes, and Raji B-lymphocytes compared (at protein level).

The protein localises to the cytoplasm. It localises to the cytoskeleton. Its subcellular location is the cell membrane. It is found in the cell projection. The protein resides in the phagocytic cup. Functionally, probably involved in the organization of the actin cytoskeleton by acting downstream of CDC42, inducing actin filament assembly. Alters CDC42-induced cell shape changes. In activated T-cells, may play a role in CDC42-mediated F-actin accumulation at the immunological synapse. May play a role in early contractile events in phagocytosis in macrophages. This chain is CDC42 small effector protein 2 (CDC42SE2), found in Homo sapiens (Human).